We begin with the raw amino-acid sequence, 445 residues long: Tubby-like F-box protein 14 (445 aa).

An F-box domain is found at 56-114 (SSCWANLPPELLRDVIERLEASEAAWPSRKNVVACAAVCRTWRDMCREIVKNPEFCGKI).

It belongs to the TUB family. As to expression, ubiquitous.

In Oryza sativa subsp. japonica (Rice), this protein is Tubby-like F-box protein 14 (TULP14).